A 211-amino-acid chain; its full sequence is Histidine biosynthesis bifunctional protein HisIE (211 aa).

Residues M1–K107 are phosphoribosyl-AMP cyclohydrolase. The segment at I108–W211 is phosphoribosyl-ATP pyrophosphohydrolase.

This sequence in the N-terminal section; belongs to the PRA-CH family. In the C-terminal section; belongs to the PRA-PH family.

It localises to the cytoplasm. It catalyses the reaction 1-(5-phospho-beta-D-ribosyl)-ATP + H2O = 1-(5-phospho-beta-D-ribosyl)-5'-AMP + diphosphate + H(+). The catalysed reaction is 1-(5-phospho-beta-D-ribosyl)-5'-AMP + H2O = 1-(5-phospho-beta-D-ribosyl)-5-[(5-phospho-beta-D-ribosylamino)methylideneamino]imidazole-4-carboxamide. It participates in amino-acid biosynthesis; L-histidine biosynthesis; L-histidine from 5-phospho-alpha-D-ribose 1-diphosphate: step 2/9. It functions in the pathway amino-acid biosynthesis; L-histidine biosynthesis; L-histidine from 5-phospho-alpha-D-ribose 1-diphosphate: step 3/9. This chain is Histidine biosynthesis bifunctional protein HisIE, found in Staphylococcus epidermidis (strain ATCC 35984 / DSM 28319 / BCRC 17069 / CCUG 31568 / BM 3577 / RP62A).